We begin with the raw amino-acid sequence, 233 residues long: 2-C-methyl-D-erythritol 4-phosphate cytidylyltransferase (233 aa).

Belongs to the IspD/TarI cytidylyltransferase family. IspD subfamily.

The catalysed reaction is 2-C-methyl-D-erythritol 4-phosphate + CTP + H(+) = 4-CDP-2-C-methyl-D-erythritol + diphosphate. The protein operates within isoprenoid biosynthesis; isopentenyl diphosphate biosynthesis via DXP pathway; isopentenyl diphosphate from 1-deoxy-D-xylulose 5-phosphate: step 2/6. Catalyzes the formation of 4-diphosphocytidyl-2-C-methyl-D-erythritol from CTP and 2-C-methyl-D-erythritol 4-phosphate (MEP). This chain is 2-C-methyl-D-erythritol 4-phosphate cytidylyltransferase, found in Aromatoleum aromaticum (strain DSM 19018 / LMG 30748 / EbN1) (Azoarcus sp. (strain EbN1)).